Here is a 383-residue protein sequence, read N- to C-terminus: ATP phosphoribosyltransferase regulatory subunit (383 aa).

This sequence belongs to the class-II aminoacyl-tRNA synthetase family. HisZ subfamily. Heteromultimer composed of HisG and HisZ subunits.

Its subcellular location is the cytoplasm. The protein operates within amino-acid biosynthesis; L-histidine biosynthesis; L-histidine from 5-phospho-alpha-D-ribose 1-diphosphate: step 1/9. Its function is as follows. Required for the first step of histidine biosynthesis. May allow the feedback regulation of ATP phosphoribosyltransferase activity by histidine. The polypeptide is ATP phosphoribosyltransferase regulatory subunit (Neisseria gonorrhoeae (strain ATCC 700825 / FA 1090)).